We begin with the raw amino-acid sequence, 165 residues long: LOB domain-containing protein 3 (165 aa).

An LOB domain is found at 13–115 (SPCAGCKLLR…TQLAFAQAEL (103 aa)).

Belongs to the LOB domain-containing protein family. In terms of tissue distribution, expressed in young shoots, roots, stems, leaves and flowers. At the bases of lateral organs formed from vegetative, inflorescence, and floral meristems.

Its subcellular location is the nucleus. This is LOB domain-containing protein 3 (LBD3) from Arabidopsis thaliana (Mouse-ear cress).